The primary structure comprises 353 residues: NADH-quinone oxidoreductase subunit H (353 aa).

Helical transmembrane passes span 8-28 (LLVY…IFIW), 75-95 (GVFW…FAAI), 108-128 (IGIL…FMAG), 148-168 (VSYE…TGSL), 179-199 (VPFI…AMAE), 229-249 (LFYL…TTLF), 258-278 (LHPV…IIWV), 297-317 (FLLP…LIAP), and 319-339 (INTA…VLLF).

Belongs to the complex I subunit 1 family. NDH-1 is composed of 14 different subunits. Subunits NuoA, H, J, K, L, M, N constitute the membrane sector of the complex.

The protein resides in the cell membrane. It catalyses the reaction a quinone + NADH + 5 H(+)(in) = a quinol + NAD(+) + 4 H(+)(out). Functionally, NDH-1 shuttles electrons from NADH, via FMN and iron-sulfur (Fe-S) centers, to quinones in the respiratory chain. The immediate electron acceptor for the enzyme in this species is believed to be ubiquinone. Couples the redox reaction to proton translocation (for every two electrons transferred, four hydrogen ions are translocated across the cytoplasmic membrane), and thus conserves the redox energy in a proton gradient. This subunit may bind ubiquinone. The sequence is that of NADH-quinone oxidoreductase subunit H from Dehalococcoides mccartyi (strain CBDB1).